The primary structure comprises 686 residues: Translation initiation factor IF-2 (686 aa).

The tract at residues 54–105 (KPSVADEFEVEEKVVRSKKNSNKKKKKGKGNEDKRQENFAGRQQTQTVETPD) is disordered. Residues 69 to 81 (RSKKNSNKKKKKG) are compositionally biased toward basic residues. One can recognise a tr-type G domain in the interval 188–357 (ERPAVVTIMG…LLISEVEEYK (170 aa)). Positions 197–204 (GHVDHGKT) are G1. 197-204 (GHVDHGKT) contributes to the GTP binding site. A G2 region spans residues 222-226 (GITQH). Residues 243–246 (DTPG) are G3. Residues 243-247 (DTPGH) and 297-300 (NKMD) each bind GTP. The tract at residues 297 to 300 (NKMD) is G4. Residues 333–335 (SAI) form a G5 region.

The protein belongs to the TRAFAC class translation factor GTPase superfamily. Classic translation factor GTPase family. IF-2 subfamily.

The protein localises to the cytoplasm. Its function is as follows. One of the essential components for the initiation of protein synthesis. Protects formylmethionyl-tRNA from spontaneous hydrolysis and promotes its binding to the 30S ribosomal subunits. Also involved in the hydrolysis of GTP during the formation of the 70S ribosomal complex. This chain is Translation initiation factor IF-2, found in Bacillus anthracis (strain A0248).